The sequence spans 93 residues: Small ribosomal subunit protein bS18c (93 aa).

This sequence belongs to the bacterial ribosomal protein bS18 family. Part of the 30S ribosomal subunit.

It is found in the plastid. The protein resides in the chloroplast. This chain is Small ribosomal subunit protein bS18c, found in Pinus koraiensis (Korean pine).